The primary structure comprises 394 residues: Elongation factor Tu 1 (394 aa).

Residues 10 to 204 (KPHVNVGTIG…ALDSYIPEPE (195 aa)) form the tr-type G domain. Positions 19-26 (GHVDHGKT) are G1. 19–26 (GHVDHGKT) serves as a coordination point for GTP. Residue Thr-26 participates in Mg(2+) binding. Residues 60 to 64 (GITIN) form a G2 region. The G3 stretch occupies residues 81–84 (DCPG). GTP-binding positions include 81–85 (DCPGH) and 136–139 (NKCD). A G4 region spans residues 136 to 139 (NKCD). The G5 stretch occupies residues 174-176 (SAL).

It belongs to the TRAFAC class translation factor GTPase superfamily. Classic translation factor GTPase family. EF-Tu/EF-1A subfamily. As to quaternary structure, monomer.

Its subcellular location is the cytoplasm. The enzyme catalyses GTP + H2O = GDP + phosphate + H(+). In terms of biological role, GTP hydrolase that promotes the GTP-dependent binding of aminoacyl-tRNA to the A-site of ribosomes during protein biosynthesis. The chain is Elongation factor Tu 1 from Shewanella oneidensis (strain ATCC 700550 / JCM 31522 / CIP 106686 / LMG 19005 / NCIMB 14063 / MR-1).